Consider the following 445-residue polypeptide: Xylose isomerase (445 aa).

Catalysis depends on residues H107 and D110. The Mg(2+) site is built by E238, E274, H277, D302, D313, D315, and D345.

The protein belongs to the xylose isomerase family. Homotetramer. It depends on Mg(2+) as a cofactor.

The protein resides in the cytoplasm. It carries out the reaction alpha-D-xylose = alpha-D-xylulofuranose. The sequence is that of Xylose isomerase from Bacillus velezensis (strain DSM 23117 / BGSC 10A6 / LMG 26770 / FZB42) (Bacillus amyloliquefaciens subsp. plantarum).